Reading from the N-terminus, the 691-residue chain is Elongation factor G (691 aa).

Residues 8–283 (EDYRNFGIMA…AVVDFLPNPT (276 aa)) enclose the tr-type G domain. GTP contacts are provided by residues 17-24 (AHIDAGKT), 81-85 (DTPGH), and 135-138 (NKMD).

It belongs to the TRAFAC class translation factor GTPase superfamily. Classic translation factor GTPase family. EF-G/EF-2 subfamily.

It localises to the cytoplasm. Its function is as follows. Catalyzes the GTP-dependent ribosomal translocation step during translation elongation. During this step, the ribosome changes from the pre-translocational (PRE) to the post-translocational (POST) state as the newly formed A-site-bound peptidyl-tRNA and P-site-bound deacylated tRNA move to the P and E sites, respectively. Catalyzes the coordinated movement of the two tRNA molecules, the mRNA and conformational changes in the ribosome. This Maricaulis maris (strain MCS10) (Caulobacter maris) protein is Elongation factor G.